We begin with the raw amino-acid sequence, 374 residues long: Protein-glutamate methylesterase/protein-glutamine glutaminase 1 (374 aa).

The region spanning 4–121 (KVLVVDDSSF…ATNKDEAILL (118 aa)) is the Response regulatory domain. Asp-55 carries the 4-aspartylphosphate modification. The interval 141–170 (PSVAPVTPRPTTGSAVGNATTPVQSASAPV) is disordered. Polar residues predominate over residues 149–167 (RPTTGSAVGNATTPVQSAS). Positions 174 to 374 (PLSSIRASGK…ESILKESARG (201 aa)) constitute a CheB-type methylesterase domain. Active-site residues include Ser-193, His-220, and Asp-316.

It belongs to the CheB family. Post-translationally, phosphorylated by CheA. Phosphorylation of the N-terminal regulatory domain activates the methylesterase activity.

It localises to the cytoplasm. The enzyme catalyses [protein]-L-glutamate 5-O-methyl ester + H2O = L-glutamyl-[protein] + methanol + H(+). It catalyses the reaction L-glutaminyl-[protein] + H2O = L-glutamyl-[protein] + NH4(+). Its function is as follows. Involved in chemotaxis. Part of a chemotaxis signal transduction system that modulates chemotaxis in response to various stimuli. Catalyzes the demethylation of specific methylglutamate residues introduced into the chemoreceptors (methyl-accepting chemotaxis proteins or MCP) by CheR. Also mediates the irreversible deamidation of specific glutamine residues to glutamic acid. The protein is Protein-glutamate methylesterase/protein-glutamine glutaminase 1 of Shewanella oneidensis (strain ATCC 700550 / JCM 31522 / CIP 106686 / LMG 19005 / NCIMB 14063 / MR-1).